Here is a 169-residue protein sequence, read N- to C-terminus: Peptide deformylase (169 aa).

Residues cysteine 91 and histidine 133 each coordinate Fe cation. Residue glutamate 134 is part of the active site. Histidine 137 provides a ligand contact to Fe cation.

Belongs to the polypeptide deformylase family. Fe(2+) is required as a cofactor.

The catalysed reaction is N-terminal N-formyl-L-methionyl-[peptide] + H2O = N-terminal L-methionyl-[peptide] + formate. Its function is as follows. Removes the formyl group from the N-terminal Met of newly synthesized proteins. Requires at least a dipeptide for an efficient rate of reaction. N-terminal L-methionine is a prerequisite for activity but the enzyme has broad specificity at other positions. This is Peptide deformylase from Haemophilus influenzae (strain ATCC 51907 / DSM 11121 / KW20 / Rd).